Here is a 105-residue protein sequence, read N- to C-terminus: Endogenous retrovirus group K member 6 Rec protein (105 aa).

A disordered region spans residues 1–49 (MNPSEMQRKAPPRRRRHRNRAPLTHKMNKMVTSEEQMKLPSTKKAEPPT). A compositionally biased stretch (basic residues) spans 10–20 (APPRRRRHRNR). The Nuclear localization signal motif lies at 13 to 20 (RRRRHRNR). A Nuclear export signal motif is present at residues 50-59 (WAQLKKLTQL).

In terms of assembly, forms homodimers, homotrimers, and homotetramers via a C-terminal domain. Associates with XPO1 and with ZNF145. Expressed at higher level in placenta, expressed at lower level in several organs and cell lines.

The protein resides in the cytoplasm. It is found in the nucleus. Its subcellular location is the nucleolus. Retroviral replication requires the nuclear export and translation of unspliced, singly-spliced and multiply-spliced derivatives of the initial genomic transcript. Rec interacts with a highly structured RNA element (RcRE) present in the viral 3'LTR and recruits the cellular nuclear export machinery. This permits export to the cytoplasm of unspliced genomic or incompletely spliced subgenomic viral transcripts. The sequence is that of Endogenous retrovirus group K member 6 Rec protein (ERVK-6) from Homo sapiens (Human).